The primary structure comprises 983 residues: Nitrate reductase [NADPH] (983 aa).

2 stretches are compositionally biased toward low complexity: residues 1–14 (MTISTTSSSTSSKT) and 26–48 (SSSSSPASSRSSSATTPEPSSPT). A disordered region spans residues 1–50 (MTISTTSSSTSSKTSSEKGDDLKGFSSSSSPASSRSSSATTPEPSSPTVL). C184 provides a ligand contact to Mo-molybdopterin. The region spanning 585–662 (DTIITAADLA…LRDFHLGRLE (78 aa)) is the Cytochrome b5 heme-binding domain. H622 and H645 together coordinate heme. Residues 688–815 (KKWRATRLVS…KGPLGSFTYL (128 aa)) enclose the FAD-binding FR-type domain. Residues 746 to 749 (RAYT), 763 to 767 (LIKVY), F768, F780, 784 to 786 (KMT), S841, and T844 each bind FAD. 952–961 (LALVCGPPPM) lines the NADP(+) pocket.

Belongs to the nitrate reductase family. In terms of assembly, homodimer. It depends on FAD as a cofactor. Heme serves as cofactor. Requires Mo-molybdopterin as cofactor.

It carries out the reaction nitrite + NADP(+) + H2O = nitrate + NADPH + H(+). It functions in the pathway nitrogen metabolism; nitrate reduction (assimilation). In terms of biological role, nitrate reductase is a key enzyme involved in the first step of nitrate assimilation in plants, fungi and bacteria. This chain is Nitrate reductase [NADPH] (NAR1), found in Mycosarcoma maydis (Corn smut fungus).